We begin with the raw amino-acid sequence, 132 residues long: Phosphoribosyl-AMP cyclohydrolase (132 aa).

Position 86 (aspartate 86) interacts with Mg(2+). Residue cysteine 87 participates in Zn(2+) binding. Mg(2+) contacts are provided by aspartate 88 and aspartate 90. 2 residues coordinate Zn(2+): cysteine 103 and cysteine 110.

The protein belongs to the PRA-CH family. Homodimer. The cofactor is Mg(2+). Zn(2+) is required as a cofactor.

The protein localises to the cytoplasm. The enzyme catalyses 1-(5-phospho-beta-D-ribosyl)-5'-AMP + H2O = 1-(5-phospho-beta-D-ribosyl)-5-[(5-phospho-beta-D-ribosylamino)methylideneamino]imidazole-4-carboxamide. The protein operates within amino-acid biosynthesis; L-histidine biosynthesis; L-histidine from 5-phospho-alpha-D-ribose 1-diphosphate: step 3/9. In terms of biological role, catalyzes the hydrolysis of the adenine ring of phosphoribosyl-AMP. In Haloquadratum walsbyi (strain DSM 16790 / HBSQ001), this protein is Phosphoribosyl-AMP cyclohydrolase.